A 481-amino-acid polypeptide reads, in one-letter code: Ankyrin repeat, SAM and basic leucine zipper domain-containing protein 1 (481 aa).

Low complexity predominate over residues 1–10 (MASGALRGLA). The segment at 1 to 23 (MASGALRGLAVAGGGESSDSEDD) is disordered. Phosphoserine occurs at positions 17, 18, and 20. ANK repeat units lie at residues 45 to 74 (EKSE…SVDS), 78 to 107 (YGWT…NASF), 110 to 144 (DKQT…DPNI), 148 to 177 (RLMT…EVNA), 181 to 210 (NGYT…NKML), and 214 to 243 (DGKI…PLEG). In terms of domain architecture, SAM spans 272–334 (SYTAFGDLEI…KILSALKELE (63 aa)).

As to quaternary structure, interacts with DDX4, PIWIL1, RANBP9 and TDRD1.

The protein resides in the cytoplasm. In terms of biological role, plays a central role during spermatogenesis by repressing transposable elements and preventing their mobilization, which is essential for the germline integrity. Acts via the piRNA metabolic process, which mediates the repression of transposable elements during meiosis by forming complexes composed of piRNAs and Piwi proteins and governs the methylation and subsequent repression of transposons. Its association with pi-bodies suggests a participation in the primary piRNAs metabolic process. Required prior to the pachytene stage to facilitate the production of multiple types of piRNAs, including those associated with repeats involved in the regulation of retrotransposons. May act by mediating protein-protein interactions during germ cell maturation. The polypeptide is Ankyrin repeat, SAM and basic leucine zipper domain-containing protein 1 (ASZ1) (Eulemur macaco macaco (Black lemur)).